The following is a 479-amino-acid chain: Phosphoglycerate kinase, glycosomal (479 aa).

Positions 23, 24, 25, 26, 39, 61, 62, 64, 65, 132, 168, and 169 each coordinate (2R)-3-phosphoglycerate. ADP contacts are provided by Gly-214 and Ala-215. Residue Gly-214 participates in CDP binding. Ala-215 and Lys-216 together coordinate AMP. Position 215 (Ala-215) interacts with ATP. Residue Ala-215 participates in Mg(2+) binding. Lys-216 provides a ligand contact to (2R)-3-phosphoglycerate. Asp-219 contacts CDP. A Mg(2+)-binding site is contributed by Asp-219. Residues Lys-220 and Gly-238 each contribute to the ADP site. Lys-220 contributes to the AMP binding site. Position 220 (Lys-220) interacts with ATP. Residue Gly-238 participates in CDP binding. Ala-239 and Ala-311 together coordinate AMP. ATP is bound by residues Ala-239 and Ala-311. The ADP site is built by Ala-311 and Asn-335. Residues Gly-336 and Phe-341 each contribute to the CDP site. The ADP site is built by Phe-341, Glu-342, Asp-374, and Ser-375. Glu-342 lines the AMP pocket. Positions 342, 374, and 375 each coordinate ATP. Asp-374 contributes to the Mg(2+) binding site.

This sequence belongs to the phosphoglycerate kinase family. Monomer. The cofactor is Mg(2+).

The protein resides in the glycosome. The catalysed reaction is (2R)-3-phosphoglycerate + ATP = (2R)-3-phospho-glyceroyl phosphate + ADP. The protein operates within carbohydrate degradation; glycolysis; pyruvate from D-glyceraldehyde 3-phosphate: step 2/5. This is Phosphoglycerate kinase, glycosomal (PGKC) from Leishmania major.